A 33-amino-acid chain; its full sequence is Dermonecrotic toxin LbSicTox-alphaIB1b (33 aa).

Residue His-11 is part of the active site. Residues Glu-31 and Asp-33 each coordinate Mg(2+).

Belongs to the arthropod phospholipase D family. Class II subfamily. Mg(2+) serves as cofactor. Contains 2 disulfide bonds. In terms of tissue distribution, expressed by the venom gland.

The protein localises to the secreted. The enzyme catalyses an N-(acyl)-sphingosylphosphocholine = an N-(acyl)-sphingosyl-1,3-cyclic phosphate + choline. It catalyses the reaction an N-(acyl)-sphingosylphosphoethanolamine = an N-(acyl)-sphingosyl-1,3-cyclic phosphate + ethanolamine. It carries out the reaction a 1-acyl-sn-glycero-3-phosphocholine = a 1-acyl-sn-glycero-2,3-cyclic phosphate + choline. The catalysed reaction is a 1-acyl-sn-glycero-3-phosphoethanolamine = a 1-acyl-sn-glycero-2,3-cyclic phosphate + ethanolamine. In terms of biological role, dermonecrotic toxins cleave the phosphodiester linkage between the phosphate and headgroup of certain phospholipids (sphingolipid and lysolipid substrates), forming an alcohol (often choline) and a cyclic phosphate. This toxin acts on sphingomyelin (SM) with high activity (9.5 U/mg). It may also act on ceramide phosphoethanolamine (CPE), lysophosphatidylcholine (LPC) and lysophosphatidylethanolamine (LPE), but not on lysophosphatidylserine (LPS), and lysophosphatidylglycerol (LPG). It acts by transphosphatidylation, releasing exclusively cyclic phosphate products as second products. Induces dermonecrosis, hemolysis, increased vascular permeability, edema, inflammatory response, and platelet aggregation. The chain is Dermonecrotic toxin LbSicTox-alphaIB1b from Loxosceles boneti (North American fiddleback spider).